A 354-amino-acid chain; its full sequence is Fructose-bisphosphate aldolase (354 aa).

Ser-50 contributes to the D-glyceraldehyde 3-phosphate binding site. Asp-83 serves as the catalytic Proton donor. Residues His-84, Asp-105, Glu-142, and His-198 each contribute to the Zn(2+) site. A dihydroxyacetone phosphate-binding site is contributed by Gly-199. His-232 contributes to the Zn(2+) binding site. Residues 233–235 (GSS) and 275–278 (NIDT) each bind dihydroxyacetone phosphate.

Belongs to the class II fructose-bisphosphate aldolase family. Homodimer. Zn(2+) is required as a cofactor.

The catalysed reaction is beta-D-fructose 1,6-bisphosphate = D-glyceraldehyde 3-phosphate + dihydroxyacetone phosphate. It functions in the pathway carbohydrate biosynthesis; Calvin cycle. Its pathway is carbohydrate degradation; glycolysis; D-glyceraldehyde 3-phosphate and glycerone phosphate from D-glucose: step 4/4. Its activity is regulated as follows. Activity is stimulated by Fe(2+) in autotrophically grown cells. Catalyzes the aldol condensation of dihydroxyacetone phosphate (DHAP or glycerone-phosphate) with glyceraldehyde 3-phosphate (G3P) to form fructose 1,6-bisphosphate (FBP) in gluconeogenesis and the reverse reaction in glycolysis. The chain is Fructose-bisphosphate aldolase from Xanthobacter flavus.